Here is a 155-residue protein sequence, read N- to C-terminus: Endoribonuclease YbeY (155 aa).

Positions 113, 117, and 123 each coordinate Zn(2+).

This sequence belongs to the endoribonuclease YbeY family. Requires Zn(2+) as cofactor.

The protein localises to the cytoplasm. In terms of biological role, single strand-specific metallo-endoribonuclease involved in late-stage 70S ribosome quality control and in maturation of the 3' terminus of the 16S rRNA. The sequence is that of Endoribonuclease YbeY from Ureaplasma urealyticum serovar 10 (strain ATCC 33699 / Western).